Here is an 828-residue protein sequence, read N- to C-terminus: Protein kintoun (828 aa).

Disordered stretches follow at residues 1–31 (MSGS…DEPI), 223–250 (KNPT…EGEP), 383–424 (DSGV…PTSN), 556–668 (APVQ…HRGI), and 741–828 (KKNQ…EDLI). Residues 9–22 (RNKHSKGNLKHNNN) are compositionally biased toward basic residues. A Phosphoserine modification is found at S384. Over residues 395–414 (PVEEEEDGEDEIEAEEEEEE) the composition is skewed to acidic residues. The span at 556 to 573 (APVQEDKPGDIQFKRNDQ) shows a compositional bias: basic and acidic residues. Acidic residues predominate over residues 591–601 (EREEGEIEEAE). Positions 606-620 (KKSASKKQRGKRNKK) are enriched in basic residues. The span at 625 to 641 (SESACVSLPTSVDSQPM) shows a compositional bias: polar residues. Over residues 741 to 755 (KKNQKRRDCKLRAQQ) the composition is skewed to basic residues. S759 carries the phosphoserine modification. Over residues 788–808 (DSGLDLTRHNKKRELAEEADN) the composition is skewed to basic and acidic residues. The segment covering 815–828 (EMDDDDDDEDEDLI) has biased composition (acidic residues).

It belongs to the PIH1 family. Kintoun subfamily. As to quaternary structure, interacts with Pp1alpha-96A, Pp1-87B, Pp1-13C and flw.

The protein localises to the cytoplasm. Required for cytoplasmic pre-assembly of axonemal dyneins, thereby playing a central role in motility in cilia and flagella. Involved in pre-assembly of dynein arm complexes in the cytoplasm before intraflagellar transport loads them for the ciliary compartment. The chain is Protein kintoun from Drosophila willistoni (Fruit fly).